Consider the following 239-residue polypeptide: Orotidine 5'-phosphate decarboxylase (239 aa).

Residues Asp10, Lys33, 60–69 (DLKLYDIPNT), Thr124, Arg186, Gln195, Gly215, and Arg216 each bind substrate. Lys62 functions as the Proton donor in the catalytic mechanism.

Belongs to the OMP decarboxylase family. Type 1 subfamily. As to quaternary structure, homodimer.

The catalysed reaction is orotidine 5'-phosphate + H(+) = UMP + CO2. The protein operates within pyrimidine metabolism; UMP biosynthesis via de novo pathway; UMP from orotate: step 2/2. Functionally, catalyzes the decarboxylation of orotidine 5'-monophosphate (OMP) to uridine 5'-monophosphate (UMP). This chain is Orotidine 5'-phosphate decarboxylase, found in Latilactobacillus sakei subsp. sakei (strain 23K) (Lactobacillus sakei subsp. sakei).